The chain runs to 364 residues: MREETREQPAPLRSGLTTGSCATATSLAAARLLLTGVSTDAVSITLPKGKVVQMRLEFCRREDERAEAGTLKDAGDDPDVTHGALLYSQVRLQDEPGIRFVAGVGVGTVTRPGLVLAVGEPAINPVPRRMISEHLQQLADDCAYRGGFEVTVNVKGGEQLALKTMNPRLGILGGLSILGTSGIVRPFSCAAYIASIHQGIDVAHTNGYTHIAACTGNASEDTMRRVYGLPEIALIEMGDFVGAVLKHLRKVPVPRLSLCGGFGKISKLAAGHMDLHSRHSSIDLPQLAGWAADIGADADLQAAIMAANTSQQALALAHAAGIALGDAVCAHALAFARSVVPAQVQVEVFAIDRQGGIVGKAGMQ.

It belongs to the CbiD family.

It catalyses the reaction Co-precorrin-5B + S-adenosyl-L-methionine = Co-precorrin-6A + S-adenosyl-L-homocysteine. The protein operates within cofactor biosynthesis; adenosylcobalamin biosynthesis; cob(II)yrinate a,c-diamide from sirohydrochlorin (anaerobic route): step 6/10. Its function is as follows. Catalyzes the methylation of C-1 in cobalt-precorrin-5B to form cobalt-precorrin-6A. This Pseudomonas putida (strain W619) protein is Cobalt-precorrin-5B C(1)-methyltransferase.